Reading from the N-terminus, the 504-residue chain is D-alanine--D-alanyl carrier protein ligase (504 aa).

152–153 (TS) contributes to the ATP binding site. Asp197 contributes to the D-alanine binding site. Residue 292–297 (NTYGPT) coordinates ATP. Val301 is a binding site for D-alanine. ATP is bound by residues Asp383, 394–397 (YNGR), and Lys492. Lys492 provides a ligand contact to D-alanine.

The protein belongs to the ATP-dependent AMP-binding enzyme family. DltA subfamily.

Its subcellular location is the cytoplasm. The enzyme catalyses holo-[D-alanyl-carrier protein] + D-alanine + ATP = D-alanyl-[D-alanyl-carrier protein] + AMP + diphosphate. Its pathway is cell wall biogenesis; lipoteichoic acid biosynthesis. In terms of biological role, catalyzes the first step in the D-alanylation of lipoteichoic acid (LTA), the activation of D-alanine and its transfer onto the D-alanyl carrier protein (Dcp) DltC. In an ATP-dependent two-step reaction, forms a high energy D-alanyl-AMP intermediate, followed by transfer of the D-alanyl residue as a thiol ester to the phosphopantheinyl prosthetic group of the Dcp. D-alanylation of LTA plays an important role in modulating the properties of the cell wall in Gram-positive bacteria, influencing the net charge of the cell wall. This Bacillus cereus (strain ATCC 10987 / NRS 248) protein is D-alanine--D-alanyl carrier protein ligase.